We begin with the raw amino-acid sequence, 236 residues long: LexA repressor (236 aa).

The segment at residues 26-46 (FDEMKEALDLRSKSGIHRLIT) is a DNA-binding region (H-T-H motif). Catalysis depends on for autocatalytic cleavage activity residues Ser-157 and Lys-195.

It belongs to the peptidase S24 family. As to quaternary structure, homodimer.

It carries out the reaction Hydrolysis of Ala-|-Gly bond in repressor LexA.. Represses a number of genes involved in the response to DNA damage (SOS response), including recA and lexA. In the presence of single-stranded DNA, RecA interacts with LexA causing an autocatalytic cleavage which disrupts the DNA-binding part of LexA, leading to derepression of the SOS regulon and eventually DNA repair. This Azorhizobium caulinodans (strain ATCC 43989 / DSM 5975 / JCM 20966 / LMG 6465 / NBRC 14845 / NCIMB 13405 / ORS 571) protein is LexA repressor.